Here is a 542-residue protein sequence, read N- to C-terminus: Chaperonin GroEL (542 aa).

Residues 29–32 (TLGP), 86–90 (DGTTT), Gly413, 476–478 (NAA), and Asp492 each bind ATP.

Belongs to the chaperonin (HSP60) family. Forms a cylinder of 14 subunits composed of two heptameric rings stacked back-to-back. Interacts with the co-chaperonin GroES.

It localises to the cytoplasm. It carries out the reaction ATP + H2O + a folded polypeptide = ADP + phosphate + an unfolded polypeptide.. Functionally, together with its co-chaperonin GroES, plays an essential role in assisting protein folding. The GroEL-GroES system forms a nano-cage that allows encapsulation of the non-native substrate proteins and provides a physical environment optimized to promote and accelerate protein folding. In Streptococcus mutans serotype c (strain ATCC 700610 / UA159), this protein is Chaperonin GroEL.